The primary structure comprises 725 residues: Sodium/hydrogen exchanger 7 (725 aa).

Positions 1–20 (MEPGDAARPGSGRATGAPPP) are disordered. At 1-21 (MEPGDAARPGSGRATGAPPPR) the chain is on the cytoplasmic side. A helical transmembrane segment spans residues 22-42 (LLLLPLLLGWGLRVAAAASAS). The Lumenal segment spans residues 43-70 (SSGAAAEDSSAMEELATEKEAEESHRQD). The chain crosses the membrane as a helical span at residues 71–91 (SVSLLTFILLLTLTILTIWLF). The Cytoplasmic segment spans residues 92–95 (KHRR). The helical transmembrane segment at 96–116 (VRFLHETGLAMIYGLIVGVIL) threads the bilayer. Residues 117-175 (RYGTPATSGRDKSLSCTQEDRAFSTLLVNVSGKFFEYTLKGEISPGKINSVEQNDMLRK) are Lumenal-facing. Asn-145 carries N-linked (GlcNAc...) asparagine glycosylation. A helical transmembrane segment spans residues 176 to 196 (VTFDPEVFFNILLPPIIFHAG). Over 197–210 (YSLKKRHFFRNLGS) the chain is Cytoplasmic. Residues 211–231 (ILAYAFLGTAVSCFIIGNLMY) traverse the membrane as a helical segment. Topologically, residues 232 to 251 (GVVKLMKIMGQLSDKFYYTD) are lumenal. A helical transmembrane segment spans residues 252–272 (CLFFGAIISATDPVTVLAIFN). Residues 273–277 (ELHAD) are Cytoplasmic-facing. A helical membrane pass occupies residues 278 to 298 (VDLYALLFGESVLNDAVAIVL). Residues 299–322 (SSSIVAYQPAGLNTHAFDAAAFFK) lie on the Lumenal side of the membrane. Residues 323-343 (SVGIFLGIFSGSFTMGAVTGV) form a helical membrane-spanning segment. The Cytoplasmic portion of the chain corresponds to 344–349 (NANVTK). 2 consecutive transmembrane segments (helical) span residues 350-370 (FTKL…MSWS) and 371-391 (TFLL…FCGI). Residues 392–414 (TQAHYTYNNLSVESRSRTKQLFE) lie on the Cytoplasmic side of the membrane. Residues 415–435 (VLHFLAENFIFSYMGLALFTF) form a helical membrane-spanning segment. Topologically, residues 436–442 (QKHVFSP) are lumenal. The chain crosses the membrane as a helical span at residues 443 to 463 (IFIIGAFVAIFLGRAAHIYPL). Residues 464-474 (SFFLNLGRRHK) lie on the Cytoplasmic side of the membrane. A helical transmembrane segment spans residues 475 to 497 (IGWNFQHMMMFSGLRGAMAFALA). The Lumenal segment spans residues 498–513 (IRDTASYARQMMFTTT). The helical transmembrane segment at 514–534 (LLIVFFTVWIIGGGTTPMLSW) threads the bilayer. Required for trans-Golgi network localization stretches follow at residues 533–559 (SWLN…YFRV) and 563–568 (PDQDPP). At 535–725 (LNIRVGVEEP…RLVFPLEDNA (191 aa)) the chain is on the cytoplasmic side. Ser-545 bears the Phosphoserine mark. Disordered stretches follow at residues 567-590 (PPPN…GNRT) and 669-714 (TVTA…SSRG). Residues 675–684 (SSSSHTASTS) are compositionally biased toward low complexity. The segment covering 687 to 704 (GSRRTKSSSEEVLERDLG) has biased composition (basic and acidic residues).

Belongs to the monovalent cation:proton antiporter 1 (CPA1) transporter (TC 2.A.36) family. As to quaternary structure, interacts with SCAMP1, SCAMP2 and SCAMP5; may participate in its shuttling from trans-Golgi network to recycling endosomes. Post-translationally, N-glycosylated. In terms of tissue distribution, ubiquitously expressed.

Its subcellular location is the golgi apparatus. It is found in the trans-Golgi network membrane. The protein localises to the recycling endosome membrane. It localises to the cell membrane. It catalyses the reaction Na(+)(in) + H(+)(out) = Na(+)(out) + H(+)(in). The catalysed reaction is K(+)(in) + H(+)(out) = K(+)(out) + H(+)(in). With respect to regulation, inhibited by benzamil and quinine but not by amiloride. Its function is as follows. Golgi Na(+), K(+)/(H+) antiporter. Mediates the electoneutral influx of Na(+) or K(+) in exchange for H(+). May contribute to the regulation of Golgi apparatus volume and pH. In Homo sapiens (Human), this protein is Sodium/hydrogen exchanger 7 (SLC9A7).